The chain runs to 390 residues: Guanine nucleotide exchange factor for Rab-3A (390 aa).

Residues 1–60 (MWSGQPHPDEGHPPPLEAVPVPWKSVGPCKSHRESLGGLPETPAGEEAQGEEGPAATQLD) are disordered. Positions 40–58 (PETPAGEEAQGEEGPAATQ) are enriched in low complexity. The stretch at 73 to 161 (EKGSEFLKEE…AEVTALKTLV (89 aa)) forms a coiled coil. Positions 166-194 (PASPNRELHPQLLSPTKAGPRKGHLRHKS) are disordered. 2 positions are modified to phosphoserine: Ser-168 and Ser-179. Basic residues predominate over residues 184–194 (GPRKGHLRHKS).

It belongs to the SEC2 family. As to quaternary structure, interacts with RAB3A and IHPK1 through the coiled-coil domain. This interaction is competitive. IHPK1 kinase activity is not required for this interaction.

Guanine nucleotide exchange factor (GEF) which may activate RAB3A, a GTPase that regulates synaptic vesicle exocytosis. Promotes the exchange of GDP to GTP, converting inactive GDP-bound Rab proteins into their active GTP-bound form. May also activate RAB8A and RAB8B. This is Guanine nucleotide exchange factor for Rab-3A (RAB3IL1) from Bos taurus (Bovine).